The sequence spans 285 residues: 2-dehydro-3-deoxyphosphooctonate aldolase (285 aa).

It belongs to the KdsA family.

It localises to the cytoplasm. The catalysed reaction is D-arabinose 5-phosphate + phosphoenolpyruvate + H2O = 3-deoxy-alpha-D-manno-2-octulosonate-8-phosphate + phosphate. It functions in the pathway carbohydrate biosynthesis; 3-deoxy-D-manno-octulosonate biosynthesis; 3-deoxy-D-manno-octulosonate from D-ribulose 5-phosphate: step 2/3. Its pathway is bacterial outer membrane biogenesis; lipopolysaccharide biosynthesis. The polypeptide is 2-dehydro-3-deoxyphosphooctonate aldolase (Acidovorax sp. (strain JS42)).